The following is a 98-amino-acid chain: NADH-ubiquinone oxidoreductase chain 4L (98 aa).

3 helical membrane passes run Met1 to Thr21, Val27 to Ile47, and Ile61 to Ile81.

Belongs to the complex I subunit 4L family. As to quaternary structure, core subunit of respiratory chain NADH dehydrogenase (Complex I) which is composed of 45 different subunits.

The protein resides in the mitochondrion inner membrane. The enzyme catalyses a ubiquinone + NADH + 5 H(+)(in) = a ubiquinol + NAD(+) + 4 H(+)(out). Core subunit of the mitochondrial membrane respiratory chain NADH dehydrogenase (Complex I) which catalyzes electron transfer from NADH through the respiratory chain, using ubiquinone as an electron acceptor. Part of the enzyme membrane arm which is embedded in the lipid bilayer and involved in proton translocation. The chain is NADH-ubiquinone oxidoreductase chain 4L (MT-ND4L) from Macaca nigra (Celebes black macaque).